Here is a 227-residue protein sequence, read N- to C-terminus: Isopentenyl-diphosphate Delta-isomerase 1 (227 aa).

Position 36 (lysine 36) interacts with substrate. Mg(2+) is bound by residues histidine 40 and histidine 51. One can recognise a Nudix hydrolase domain in the interval 49 to 199 (LLHRAFSVFL…EIKITPWFKI (151 aa)). Residues arginine 70 and lysine 74 each contribute to the substrate site. Cysteine 86 is a catalytic residue. A substrate-binding site is contributed by serine 87. Positions 146 and 148 each coordinate Mg(2+). Residue glutamate 148 is part of the active site. At lysine 176 the chain carries N6-acetyllysine. The Microbody targeting signal motif lies at 225–227 (YRI).

Belongs to the IPP isomerase type 1 family. In terms of assembly, monomer. Mg(2+) serves as cofactor.

Its subcellular location is the peroxisome. It catalyses the reaction isopentenyl diphosphate = dimethylallyl diphosphate. It participates in isoprenoid biosynthesis; dimethylallyl diphosphate biosynthesis; dimethylallyl diphosphate from isopentenyl diphosphate: step 1/1. Functionally, catalyzes the 1,3-allylic rearrangement of the homoallylic substrate isopentenyl (IPP) to its highly electrophilic allylic isomer, dimethylallyl diphosphate (DMAPP). This Pongo abelii (Sumatran orangutan) protein is Isopentenyl-diphosphate Delta-isomerase 1 (IDI1).